We begin with the raw amino-acid sequence, 103 residues long: Large ribosomal subunit protein uL24 (103 aa).

It belongs to the universal ribosomal protein uL24 family. Part of the 50S ribosomal subunit.

Functionally, one of two assembly initiator proteins, it binds directly to the 5'-end of the 23S rRNA, where it nucleates assembly of the 50S subunit. In terms of biological role, one of the proteins that surrounds the polypeptide exit tunnel on the outside of the subunit. This Dehalococcoides mccartyi (strain ATCC BAA-2266 / KCTC 15142 / 195) (Dehalococcoides ethenogenes (strain 195)) protein is Large ribosomal subunit protein uL24.